Here is a 167-residue protein sequence, read N- to C-terminus: MLVLLAFIIVFHITSAALLLVATIDNAWWVGEEFFADIWKVCVNNTNCTELNDSVQDFSTVQAVQATMILSTILCCIAFLIFLLQLFRLKQGERFVLTSIIQLMACLCVMIAASIYTDRRKDIHEKNEELYAQTSGGSFGYSFILAWVAFAFTFISGLMYLILRKRK.

The helical transmembrane segment at 1–21 threads the bilayer; the sequence is MLVLLAFIIVFHITSAALLLV. 3 N-linked (GlcNAc...) asparagine glycosylation sites follow: N44, N47, and N52. The next 3 membrane-spanning stretches (helical) occupy residues 67 to 87, 95 to 115, and 143 to 163; these read TMIL…LQLF, FVLT…AASI, and FILA…YLIL.

Belongs to the PMP-22/EMP/MP20 family. In terms of assembly, interacts with PTK2; regulates PTK2 activation and localization. Interacts with ITGB3; regulates the levels of the heterodimer ITGA5-ITGB3 integrin surface expression. Interacts with P2RX7 (via C-terminus). Interacts with ITGB1; the interaction may be direct or indirect and ITGB1 has a heterodimer form.

Its subcellular location is the golgi apparatus membrane. The protein localises to the cell membrane. It localises to the apical cell membrane. The protein resides in the membrane raft. It is found in the cytoplasm. Its subcellular location is the nucleus. The protein localises to the perinuclear region. Its function is as follows. Functions as a key regulator of cell membrane composition by regulating protein surface expression. Also, plays a role in regulation of processes including cell migration, cell proliferation, cell contraction and cell adhesion. Regulates transepithelial migration of neutrophils into the alveolar lumen, potentially via mediation of cell surface expression of adhesion markers and lipid raft formation. Negatively regulates caveolae formation by reducing CAV1 expression and CAV1 amount by increasing lysosomal degradation. Facilitates surface trafficking and the formation of lipid rafts bearing GPI-anchor proteins. Regulates surface expression of MHC1 and ICAM1 proteins increasing susceptibility to T-cell mediated cytotoxicity. Regulates the plasma membrane expression of the integrin heterodimers ITGA6-ITGB1, ITGA5-ITGB3 and ITGA5-ITGB1 resulting in modulation of cell-matrix adhesion. Also regulates many processes through PTK2. Regulates blood vessel endothelial cell migration and angiogenesis by regulating VEGF protein expression through PTK2 activation. Regulates cell migration and cell contraction through PTK2 and SRC activation. Regulates focal adhesion density, F-actin conformation and cell adhesion capacity through interaction with PTK2. Positively regulates cell proliferation. Plays a role during cell death and cell blebbing. Promotes angiogenesis and vasculogenesis through induction of VEGFA via a HIF1A-dependent pathway. Also plays a role in embryo implantation by regulating surface trafficking of integrin heterodimer ITGA5-ITGB3. Plays a role in placental angiogenesis and uterine natural killer cell regulation at the maternal-fetal placental interface, however not required in the maternal tissues for a viable pregnancy. Involved in the early stages of embryogenic development and cardiogenesis, potentially via regulation of epithelial-mesenchymal transition timing. May play a role in glomerular filtration. The protein is Epithelial membrane protein 2 (EMP2) of Bos taurus (Bovine).